Reading from the N-terminus, the 58-residue chain is Light-harvesting protein B-870 alpha chain (58 aa).

The Cytoplasmic portion of the chain corresponds to 1 to 15; it reads MSKFYKIWLVFDPRR. The helical transmembrane segment at 16–36 threads the bilayer; that stretch reads VFVAQGVFLFLLAVLIHLILL. A bacteriochlorophyll is bound at residue His-32. The Periplasmic portion of the chain corresponds to 37–58; sequence STPAFNWLTVATAKHGYVAAAQ.

Belongs to the antenna complex alpha subunit family. In terms of assembly, the core complex is formed by different alpha and beta chains, binding bacteriochlorophyll molecules, and arranged most probably in tetrameric structures disposed around the reaction center. The non-pigmented gamma chains may constitute additional components.

The protein localises to the cell inner membrane. In terms of biological role, antenna complexes are light-harvesting systems, which transfer the excitation energy to the reaction centers. This Rhodobacter capsulatus (Rhodopseudomonas capsulata) protein is Light-harvesting protein B-870 alpha chain (pufA).